The primary structure comprises 125 residues: Small ribosomal subunit protein uS12 (125 aa).

Aspartate 89 is subject to 3-methylthioaspartic acid.

Belongs to the universal ribosomal protein uS12 family. Part of the 30S ribosomal subunit. Contacts proteins S8 and S17. May interact with IF1 in the 30S initiation complex.

Functionally, with S4 and S5 plays an important role in translational accuracy. Interacts with and stabilizes bases of the 16S rRNA that are involved in tRNA selection in the A site and with the mRNA backbone. Located at the interface of the 30S and 50S subunits, it traverses the body of the 30S subunit contacting proteins on the other side and probably holding the rRNA structure together. The combined cluster of proteins S8, S12 and S17 appears to hold together the shoulder and platform of the 30S subunit. The sequence is that of Small ribosomal subunit protein uS12 from Clostridium novyi (strain NT).